The chain runs to 21 residues: Endo-1,4-beta-xylanase A (21 aa).

Belongs to the glycosyl hydrolase 10 (cellulase F) family.

It carries out the reaction Endohydrolysis of (1-&gt;4)-beta-D-xylosidic linkages in xylans.. It functions in the pathway glycan degradation; xylan degradation. The protein is Endo-1,4-beta-xylanase A of Dictyoglomus sp. (strain B4A).